The following is an 89-amino-acid chain: Small ribosomal subunit protein uS15 (89 aa).

The protein belongs to the universal ribosomal protein uS15 family. In terms of assembly, part of the 30S ribosomal subunit. Forms a bridge to the 50S subunit in the 70S ribosome, contacting the 23S rRNA.

Functionally, one of the primary rRNA binding proteins, it binds directly to 16S rRNA where it helps nucleate assembly of the platform of the 30S subunit by binding and bridging several RNA helices of the 16S rRNA. In terms of biological role, forms an intersubunit bridge (bridge B4) with the 23S rRNA of the 50S subunit in the ribosome. The protein is Small ribosomal subunit protein uS15 of Bradyrhizobium sp. (strain BTAi1 / ATCC BAA-1182).